The chain runs to 604 residues: Vacuolar protein sorting-associated protein 64 (604 aa).

The tract at residues 1-89 (MVELEKRRRP…SVHQVSQQQQ (89 aa)) is disordered. The Cytoplasmic segment spans residues 1–578 (MVELEKRRRP…LGVVEGKRTR (578 aa)). Positions 22 to 34 (DQSNSQGMTKTPE) are enriched in polar residues. Composition is skewed to low complexity over residues 44 to 57 (RARSNSRSSGSRSN) and 77 to 89 (SPPSVHQVSQQQQ). The FHA domain occupies 185-257 (LKLGRPVTNS…NGTFVNGVKI (73 aa)). Residues 404 to 563 (NLINMIKTLT…EEKKDTEDTL (160 aa)) are a coiled coil. The interval 539 to 561 (INNDNNAKVKQNDSREEKKDTED) is disordered. Basic and acidic residues predominate over residues 548–560 (KQNDSREEKKDTE). Residues 579–598 (VSKGMLFGVVAISFGLVATA) traverse the membrane as a helical; Anchor for type IV membrane protein segment. Residues 599-604 (VKQLPQ) are Lumenal-facing.

Component of a complex at least composed of FAR3, FAR7, FAR8, FAR10, FAR11 and VPS64.

It localises to the endoplasmic reticulum membrane. Participates in the control of the reentry into the cell cycle following pheromone treatment. Involved in vacuolar protein sorting. The sequence is that of Vacuolar protein sorting-associated protein 64 (VPS64) from Saccharomyces cerevisiae (strain ATCC 204508 / S288c) (Baker's yeast).